The sequence spans 727 residues: Pollen-specific leucine-rich repeat extensin-like protein 3 (727 aa).

An N-terminal signal peptide occupies residues 1 to 22; that stretch reads MPHIYKQPLGIFQGFVPTLTDA. The LRR 1 repeat unit spans residues 19-43; it reads LTDAEVSFIAQRQLLTLPENGELPD. N-linked (GlcNAc...) asparagine glycosylation occurs at N80. 9 LRR repeats span residues 107 to 131, 132 to 154, 156 to 179, 180 to 202, 203 to 226, 228 to 249, 250 to 273, 275 to 296, and 297 to 321; these read VAVVAGVDLNGADIAGHLPAELGLM, TDVAMFHLNSNRFCGIIPKSFEK, SLMHEFDVSNNRFVGPFPSVVLSW, PAVKFIDVRYNDFEGQVPPELFK, KDLDAIFLNNNRFTSTIPDSLGES, ASVVTFAHNKFSGCIPRSIGNM, KNLNEIIFKDNSLGGCFPSEIGKL, NVNVFDASMNSFTGVLPPSFVG, and LTSMEEFDISGNKLTGFIPENICKL. The N-linked (GlcNAc...) asparagine glycan is linked to N326. The interval 381–727 is disordered; sequence SKDKCAGGSS…SPPPPMFQGY (347 aa). 5 stretches are compositionally biased toward pro residues: residues 397-419, 446-457, 466-479, 492-677, and 718-727; these read SPSPVPTRPVHKPQPPKESPQPN, SPPPASSPPTSP, VHKPQPPKESPQPN, SPPP…PKMS, and SPPPPMFQGY. A contains the Ser-Pro(4) repeats region spans residues 432-727; that stretch reads SPPPPQQPHH…SPPPPMFQGY (296 aa).

Hydroxylated on proline residues in the S-P-P-P-P repeat. Post-translationally, O-glycosylated on hydroxyprolines. In terms of tissue distribution, expressed in flowers, stamen, pollen, and pollinated carpels.

The protein resides in the secreted. Its subcellular location is the cell wall. Modulates cell morphogenesis by regulating cell wall formation and assembly, and/or growth polarization. The sequence is that of Pollen-specific leucine-rich repeat extensin-like protein 3 (PEX3) from Arabidopsis thaliana (Mouse-ear cress).